Here is a 339-residue protein sequence, read N- to C-terminus: Anthranilate phosphoribosyltransferase (339 aa).

5-phospho-alpha-D-ribose 1-diphosphate-binding positions include Gly-81, 84–85 (GD), Ser-89, 91–94 (NVST), 109–117 (KHGNRALSS), and Ala-121. Gly-81 serves as a coordination point for anthranilate. Ser-93 contacts Mg(2+). Asn-112 provides a ligand contact to anthranilate. Position 167 (Arg-167) interacts with anthranilate. Residues Asp-226 and Glu-227 each coordinate Mg(2+).

This sequence belongs to the anthranilate phosphoribosyltransferase family. As to quaternary structure, homodimer. It depends on Mg(2+) as a cofactor.

It carries out the reaction N-(5-phospho-beta-D-ribosyl)anthranilate + diphosphate = 5-phospho-alpha-D-ribose 1-diphosphate + anthranilate. Its pathway is amino-acid biosynthesis; L-tryptophan biosynthesis; L-tryptophan from chorismate: step 2/5. Its function is as follows. Catalyzes the transfer of the phosphoribosyl group of 5-phosphorylribose-1-pyrophosphate (PRPP) to anthranilate to yield N-(5'-phosphoribosyl)-anthranilate (PRA). The polypeptide is Anthranilate phosphoribosyltransferase (Rhodopseudomonas palustris (strain BisA53)).